Consider the following 92-residue polypeptide: Acylphosphatase (92 aa).

Positions 5–92 (RVHIIVSGLV…TSCREFRILT (88 aa)) constitute an Acylphosphatase-like domain. Catalysis depends on residues R20 and N38.

It belongs to the acylphosphatase family.

The enzyme catalyses an acyl phosphate + H2O = a carboxylate + phosphate + H(+). In Chlorobaculum tepidum (strain ATCC 49652 / DSM 12025 / NBRC 103806 / TLS) (Chlorobium tepidum), this protein is Acylphosphatase (acyP).